Here is a 106-residue protein sequence, read N- to C-terminus: Large ribosomal subunit protein uL24 (106 aa).

The protein belongs to the universal ribosomal protein uL24 family. As to quaternary structure, part of the 50S ribosomal subunit.

One of two assembly initiator proteins, it binds directly to the 5'-end of the 23S rRNA, where it nucleates assembly of the 50S subunit. Functionally, one of the proteins that surrounds the polypeptide exit tunnel on the outside of the subunit. This Bordetella petrii (strain ATCC BAA-461 / DSM 12804 / CCUG 43448) protein is Large ribosomal subunit protein uL24.